A 406-amino-acid chain; its full sequence is Imidazolonepropionase (406 aa).

Fe(3+) contacts are provided by His72 and His74. 2 residues coordinate Zn(2+): His72 and His74. 4-imidazolone-5-propanoate-binding residues include Arg81, Tyr144, and His177. Tyr144 is a binding site for N-formimidoyl-L-glutamate. Residue His242 coordinates Fe(3+). His242 is a Zn(2+) binding site. Gln245 is a binding site for 4-imidazolone-5-propanoate. Asp317 is a Fe(3+) binding site. Residue Asp317 coordinates Zn(2+). Positions 319 and 321 each coordinate N-formimidoyl-L-glutamate. Thr322 lines the 4-imidazolone-5-propanoate pocket.

Belongs to the metallo-dependent hydrolases superfamily. HutI family. The cofactor is Zn(2+). Fe(3+) is required as a cofactor.

The protein resides in the cytoplasm. It catalyses the reaction 4-imidazolone-5-propanoate + H2O = N-formimidoyl-L-glutamate. It participates in amino-acid degradation; L-histidine degradation into L-glutamate; N-formimidoyl-L-glutamate from L-histidine: step 3/3. Functionally, catalyzes the hydrolytic cleavage of the carbon-nitrogen bond in imidazolone-5-propanoate to yield N-formimidoyl-L-glutamate. It is the third step in the universal histidine degradation pathway. This Yersinia pseudotuberculosis serotype O:1b (strain IP 31758) protein is Imidazolonepropionase.